We begin with the raw amino-acid sequence, 356 residues long: Sterol-4-alpha-carboxylate 3-dehydrogenase, decarboxylating (356 aa).

M1 bears the N-acetylmethionine mark. The active-site Proton acceptor is Y155. K159 lines the NAD(+) pocket. The chain crosses the membrane as a helical span at residues 281 to 301; sequence WLAYYLALLVSLLVMVISPVI. The Prevents secretion from ER motif lies at 353–356; sequence RKVM.

This sequence belongs to the 3-beta-HSD family. In terms of assembly, homodimer.

It is found in the endoplasmic reticulum membrane. It localises to the lipid droplet. It catalyses the reaction a 3beta-hydroxysteroid-4alpha-carboxylate + NADP(+) = a 3-oxosteroid + CO2 + NADPH. The enzyme catalyses a 3beta-hydroxysteroid-4alpha-carboxylate + NAD(+) = a 3-oxosteroid + CO2 + NADH. It carries out the reaction 4alpha-carboxyzymosterol + NADP(+) = zymosterone + CO2 + NADPH. The catalysed reaction is 4alpha-carboxy-4beta-methyl-5alpha-cholest-8-en-3beta-ol + NADP(+) = 4alpha-methyl-5alpha-cholest-8-en-3-one + CO2 + NADPH. It catalyses the reaction 4alpha-carboxy-5alpha-cholest-8-ene-3beta-ol + NADP(+) = 5alpha-cholest-8-en-3-one + CO2 + NADPH. The enzyme catalyses 4beta-methylzymosterol-4alpha-carboxylate + NADP(+) = 3-dehydro-4-methylzymosterol + CO2 + NADPH. It carries out the reaction 4beta-methylzymosterol-4alpha-carboxylate + NAD(+) = 3-dehydro-4-methylzymosterol + CO2 + NADH. The catalysed reaction is 4alpha-carboxy-5alpha-cholest-8-ene-3beta-ol + NAD(+) = 5alpha-cholest-8-en-3-one + CO2 + NADH. It catalyses the reaction 4alpha-carboxy-4beta-methyl-5alpha-cholest-8-en-3beta-ol + NAD(+) = 4alpha-methyl-5alpha-cholest-8-en-3-one + CO2 + NADH. The enzyme catalyses 4alpha-carboxyzymosterol + NAD(+) = zymosterone + CO2 + NADH. The protein operates within steroid biosynthesis; zymosterol biosynthesis; zymosterol from lanosterol: step 4/6. In terms of biological role, catalyzes the NAD(P)(+)-dependent oxidative decarboxylation of the C4 methyl groups of 4-alpha-carboxysterols in post-squalene cholesterol biosynthesis. Also plays a role in the regulation of the endocytic trafficking of EGFR. This chain is Sterol-4-alpha-carboxylate 3-dehydrogenase, decarboxylating (NSDHL), found in Bos taurus (Bovine).